A 353-amino-acid chain; its full sequence is MAQADRPARGGLAARPMRGASFALAGLVACAACAAVVLWLRPAAPSPAPAGAVAGGPAAGVPAAASGAAEAAMPLPAALPGALAGSHAPRLPLAAGGRLARTRAVREFFDYCLTAQGELTPAALDALVRREIAAQLDGSPAQAEALGVWRRYRAYFDALAQLPGDGAVLGDKLDPAAMQLALDQRAALADRTLGEWAEPFFGDEQRRQRHDLERIRIANDTTLSPEQKAARLAALDAQLTPDERAQQAALHAQQDAVTKIADLQKAGATPDQMRAQIAQTLGPEAAARAAQMQQDDEAWQTRYQAYAAERDRIAAQGLAPQDRDARIAQLRQQTFTAPGEAIRAASLDRGAGG.

The Cytoplasmic segment spans residues 1 to 19; it reads MAQADRPARGGLAARPMRG. A helical membrane pass occupies residues 20-40; the sequence is ASFALAGLVACAACAAVVLWL. Topologically, residues 41–353 are periplasmic; sequence RPAAPSPAPA…AASLDRGAGG (313 aa).

The protein belongs to the lipase chaperone family. In terms of assembly, monomer. Interacts with lipase (lip).

Its subcellular location is the cell inner membrane. Involved in the folding of the extracellular lipase (lip) during its passage through the periplasm. In Burkholderia plantarii, this protein is Lipase-specific foldase.